Consider the following 407-residue polypeptide: Tryptophan synthase beta chain (407 aa).

The segment covering methionine 1 to serine 11 has biased composition (polar residues). The interval methionine 1–glycine 25 is disordered. N6-(pyridoxal phosphate)lysine is present on lysine 100.

The protein belongs to the TrpB family. In terms of assembly, tetramer of two alpha and two beta chains. Requires pyridoxal 5'-phosphate as cofactor.

The catalysed reaction is (1S,2R)-1-C-(indol-3-yl)glycerol 3-phosphate + L-serine = D-glyceraldehyde 3-phosphate + L-tryptophan + H2O. It functions in the pathway amino-acid biosynthesis; L-tryptophan biosynthesis; L-tryptophan from chorismate: step 5/5. Its function is as follows. The beta subunit is responsible for the synthesis of L-tryptophan from indole and L-serine. This is Tryptophan synthase beta chain from Rhodopirellula baltica (strain DSM 10527 / NCIMB 13988 / SH1).